The chain runs to 349 residues: tRNA uridine(34) hydroxylase (349 aa).

The region spanning 146-240 is the Rhodanese domain; the sequence is DDPDAVFIDM…YARRAREQGL (95 aa). Cys200 serves as the catalytic Cysteine persulfide intermediate. Over residues 316–328 the composition is skewed to basic and acidic residues; that stretch reads EEQRRRRAGRENG. Residues 316 to 349 are disordered; that stretch reads EEQRRRRAGRENGNKIFNKSRGRLNTKLGIPDPE.

This sequence belongs to the TrhO family.

The catalysed reaction is uridine(34) in tRNA + AH2 + O2 = 5-hydroxyuridine(34) in tRNA + A + H2O. Catalyzes oxygen-dependent 5-hydroxyuridine (ho5U) modification at position 34 in tRNAs. The polypeptide is tRNA uridine(34) hydroxylase (Enterobacter sp. (strain 638)).